We begin with the raw amino-acid sequence, 228 residues long: AA9 family lytic polysaccharide monooxygenase A (228 aa).

2 residues coordinate Cu(2+): histidine 1 and histidine 86. Histidine 1 carries the post-translational modification Methylhistidine. Intrachain disulfides connect cysteine 56–cysteine 178 and cysteine 97–cysteine 101. An N-linked (GlcNAc...) asparagine glycan is attached at asparagine 138. The O2 site is built by histidine 164 and glutamine 173. Residue tyrosine 175 coordinates Cu(2+).

This sequence belongs to the polysaccharide monooxygenase AA9 family. Cu(2+) serves as cofactor. The catalytically essential N-terminal histidine His-22 is post-translationally modified by methylation to prevent protonation of the histidine side chain, and protect the critical active site of the enzyme from oxidative damage.

The protein localises to the secreted. It carries out the reaction [(1-&gt;4)-beta-D-glucosyl]n+m + reduced acceptor + O2 = 4-dehydro-beta-D-glucosyl-[(1-&gt;4)-beta-D-glucosyl]n-1 + [(1-&gt;4)-beta-D-glucosyl]m + acceptor + H2O.. Small amounts of H(2)O(2) boost LPMO activity, while higher amounts lead to inactivation of the enzyme. In terms of biological role, lytic polysaccharide monooxygenase (LPMO) that depolymerizes crystalline and amorphous polysaccharides via the oxidation of scissile alpha- or beta-(1-4)-glycosidic bonds, yielding C1 and C4 oxidation product. Catalysis by LPMOs requires the reduction of the active-site copper from Cu(II) to Cu(I) by a reducing agent and H(2)O(2) or O(2) as a cosubstrate. Is able to cleave cellulose and xylan to produce C1- and C4-oxidized products. This is AA9 family lytic polysaccharide monooxygenase A from Thermoascus aurantiacus.